The sequence spans 98 residues: EKC/KEOPS complex subunit GON7 (98 aa).

Methionine 1 is subject to N-acetylmethionine. Residues 55–98 form a disordered region; the sequence is DAQGLAEDPDDALDGDDEDDAEDENNSGRTNSDGPSAKRPKPAS. Positions 61 to 79 are enriched in acidic residues; sequence EDPDDALDGDDEDDAEDEN.

Component of the EKC/KEOPS complex composed of at least GON7, TP53RK, TPRKB, OSGEP and LAGE3; the whole complex dimerizes.

Its subcellular location is the nucleus. Functionally, component of the EKC/KEOPS complex that is required for the formation of a threonylcarbamoyl group on adenosine at position 37 (t(6)A37) in tRNAs that read codons beginning with adenine. The complex is probably involved in the transfer of the threonylcarbamoyl moiety of threonylcarbamoyl-AMP (TC-AMP) to the N6 group of A37. GON7 plays a supporting role to the catalytic subunit OSGEP in the complex. The sequence is that of EKC/KEOPS complex subunit GON7 from Mus musculus (Mouse).